A 278-amino-acid chain; its full sequence is Tryptophan synthase alpha chain (278 aa).

Catalysis depends on proton acceptor residues Glu-50 and Asp-61.

This sequence belongs to the TrpA family. In terms of assembly, tetramer of two alpha and two beta chains.

It catalyses the reaction (1S,2R)-1-C-(indol-3-yl)glycerol 3-phosphate + L-serine = D-glyceraldehyde 3-phosphate + L-tryptophan + H2O. The protein operates within amino-acid biosynthesis; L-tryptophan biosynthesis; L-tryptophan from chorismate: step 5/5. In terms of biological role, the alpha subunit is responsible for the aldol cleavage of indoleglycerol phosphate to indole and glyceraldehyde 3-phosphate. The sequence is that of Tryptophan synthase alpha chain from Methylorubrum populi (strain ATCC BAA-705 / NCIMB 13946 / BJ001) (Methylobacterium populi).